The chain runs to 337 residues: tRNA N6-adenosine threonylcarbamoyltransferase (337 aa).

His-107 and His-111 together coordinate Fe cation. Substrate contacts are provided by residues 129–133 (LISGG), Asp-162, Gly-175, and Asn-271. Fe cation is bound at residue Asp-299.

This sequence belongs to the KAE1 / TsaD family. Requires Fe(2+) as cofactor.

The protein localises to the cytoplasm. It carries out the reaction L-threonylcarbamoyladenylate + adenosine(37) in tRNA = N(6)-L-threonylcarbamoyladenosine(37) in tRNA + AMP + H(+). In terms of biological role, required for the formation of a threonylcarbamoyl group on adenosine at position 37 (t(6)A37) in tRNAs that read codons beginning with adenine. Is involved in the transfer of the threonylcarbamoyl moiety of threonylcarbamoyl-AMP (TC-AMP) to the N6 group of A37, together with TsaE and TsaB. TsaD likely plays a direct catalytic role in this reaction. This Sulfurovum sp. (strain NBC37-1) protein is tRNA N6-adenosine threonylcarbamoyltransferase.